The following is a 417-amino-acid chain: Peptidyl-Asp metalloendopeptidase (417 aa).

The first 25 residues, 1 to 25 (MLSRSIGKAAGGLVLGLSVAAAAHA), serve as a signal peptide directing secretion. H327 contacts Zn(2+). E328 is a catalytic residue. Positions 331 and 337 each coordinate Zn(2+).

The protein belongs to the peptidase M72 family. Zn(2+) serves as cofactor.

The catalysed reaction is Cleavage of Xaa-|-Asp, Xaa-|-Glu and Xaa-|-cysteic acid bonds.. Metalloprotease, specifically cleaves on the N-terminal side of aspartyl, glutamyl and cysteic acid residues. This is Peptidyl-Asp metalloendopeptidase from Stenotrophomonas maltophilia (strain R551-3).